The chain runs to 134 residues: Interleukin-4 (134 aa).

The first 23 residues, M1–G23, serve as a signal peptide directing secretion. Disulfide bonds link C24–C133 and C48–C88. N-linked (GlcNAc...) asparagine glycosylation occurs at N38. N101 carries an N-linked (GlcNAc...) asparagine glycan.

This sequence belongs to the IL-4/IL-13 family.

Its subcellular location is the secreted. Participates in at least several B-cell activation processes as well as of other cell types. It is a costimulator of DNA-synthesis. It induces the expression of class II MHC molecules on resting B-cells. It enhances both secretion and cell surface expression of IgE and IgG1. It also regulates the expression of the low affinity Fc receptor for IgE (CD23) on both lymphocytes and monocytes. Positively regulates IL31RA expression in macrophages. Stimulates autophagy in dendritic cells by interfering with mTORC1 signaling and through the induction of RUFY4. This is Interleukin-4 (IL4) from Equus caballus (Horse).